Consider the following 198-residue polypeptide: Peroxiredoxin-2 (198 aa).

An N-acetylalanine modification is found at alanine 2. One can recognise a Thioredoxin domain in the interval 6-164; the sequence is AHIGKPAPDF…ALRLVQAFQY (159 aa). Residue cysteine 51 is the Cysteine sulfenic acid (-SOH) intermediate of the active site. The residue at position 112 (serine 112) is a Phosphoserine. Phosphothreonine is present on threonine 182. Lysine 196 carries the N6-acetyllysine modification.

Belongs to the peroxiredoxin family. AhpC/Prx1 subfamily. Homodimer; disulfide-linked, upon oxidation. 5 homodimers assemble to form a ring-like decamer. Interacts with TIPIN. In terms of processing, the enzyme can be inactivated by further oxidation of the cysteine sulfenic acid (C(P)-SOH) to sulphinic acid (C(P)-SO2H) instead of its condensation to a disulfide bond. It can be reactivated by forming a transient disulfide bond with sulfiredoxin SRXN1, which reduces the cysteine sulfinic acid in an ATP- and Mg-dependent manner. Acetylation increases resistance to transition to high molecular-mass complexes. Deacetylated by HDAC6 which decreases reducing activity.

Its subcellular location is the cytoplasm. It carries out the reaction a hydroperoxide + [thioredoxin]-dithiol = an alcohol + [thioredoxin]-disulfide + H2O. Thiol-specific peroxidase that catalyzes the reduction of hydrogen peroxide and organic hydroperoxides to water and alcohols, respectively. Plays a role in cell protection against oxidative stress by detoxifying peroxides and as sensor of hydrogen peroxide-mediated signaling events. Might participate in the signaling cascades of growth factors and tumor necrosis factor-alpha by regulating the intracellular concentrations of H(2)O(2). The chain is Peroxiredoxin-2 (PRDX2) from Cricetulus griseus (Chinese hamster).